The primary structure comprises 708 residues: Matrix metalloproteinase-9 (708 aa).

An N-terminal signal peptide occupies residues 1–19; it reads MSPWQPLLLVLLALGYSFA. The propeptide at 20-107 is activation peptide; sequence APHQRQPTYV…PRCGVPDVGK (88 aa). Residue Asn39 is glycosylated (N-linked (GlcNAc...) asparagine). The Cysteine switch signature appears at 98 to 105; it reads PRCGVPDV. Cys100 contributes to the Zn(2+) binding site. Residue Asn121 is glycosylated (N-linked (GlcNAc...) asparagine). Ca(2+) contacts are provided by Asp132 and Asp166. Zn(2+) is bound by residues His176 and Asp178. Residues Asp183, Gly184, Asp186, and Leu188 each contribute to the Ca(2+) site. Position 191 (His191) interacts with Zn(2+). Positions 198, 200, and 202 each coordinate Ca(2+). His204 is a binding site for Zn(2+). The Ca(2+) site is built by Asp206, Asp207, and Glu209. Fibronectin type-II domains follow at residues 226 to 274, 284 to 332, and 343 to 391; these read ANGA…FCPS, GDGK…FCPT, and SAGE…FCPD. Cystine bridges form between Cys231–Cys257, Cys245–Cys272, Cys289–Cys315, Cys303–Cys330, Cys348–Cys374, and Cys362–Cys389. His402 is a binding site for Zn(2+). Residue Glu403 is part of the active site. Residues His406 and His412 each coordinate Zn(2+). Residues 441-520 form a disordered region; the sequence is HHLYGRGSKP…SSTPDDNPCN (80 aa). The span at 480-490 shows a compositional bias: low complexity; that stretch reads PTGGPTVAPTG. A compositionally biased stretch (pro residues) spans 491–502; sequence APSPGPTGPPTA. A disulfide bond links Cys519 and Cys707. 4 Hemopexin repeats span residues 521–566, 567–611, 613–660, and 661–707; these read VDVF…WPAF, PSKL…GLGS, VTLV…FSGV, and PWNS…LLQC.

This sequence belongs to the peptidase M10A family. As to quaternary structure, exists as monomer or homodimer; disulfide-linked. Also exists as heterodimer with LCN2. Macrophages and transformed cell lines produce only the monomeric form. Interacts with ECM1. Requires Zn(2+) as cofactor. Ca(2+) is required as a cofactor. In terms of processing, N- and O-glycosylated.

The protein localises to the secreted. It localises to the extracellular space. It is found in the extracellular matrix. The enzyme catalyses Cleavage of gelatin types I and V and collagen types IV and V.. In terms of biological role, matrix metalloproteinase that plays an essential role in local proteolysis of the extracellular matrix and in leukocyte migration. Could play a role in bone osteoclastic resorption. Cleaves KiSS1 at a Gly-|-Leu bond. Cleaves NINJ1 to generate the Secreted ninjurin-1 form. Cleaves type IV and type V collagen into large C-terminal three quarter fragments and shorter N-terminal one quarter fragments. Degrades fibronectin but not laminin or Pz-peptide. This Rattus norvegicus (Rat) protein is Matrix metalloproteinase-9 (Mmp9).